An 83-amino-acid chain; its full sequence is Cytochrome b559 subunit alpha (83 aa).

The chain crosses the membrane as a helical span at residues V21–W35. H23 is a heme binding site.

It belongs to the PsbE/PsbF family. In terms of assembly, heterodimer of an alpha subunit and a beta subunit. PSII is composed of 1 copy each of membrane proteins PsbA, PsbB, PsbC, PsbD, PsbE, PsbF, PsbH, PsbI, PsbJ, PsbK, PsbL, PsbM, PsbT, PsbX, PsbY, PsbZ, Psb30/Ycf12, at least 3 peripheral proteins of the oxygen-evolving complex and a large number of cofactors. It forms dimeric complexes. Heme b is required as a cofactor.

It is found in the plastid. The protein localises to the chloroplast thylakoid membrane. Its function is as follows. This b-type cytochrome is tightly associated with the reaction center of photosystem II (PSII). PSII is a light-driven water:plastoquinone oxidoreductase that uses light energy to abstract electrons from H(2)O, generating O(2) and a proton gradient subsequently used for ATP formation. It consists of a core antenna complex that captures photons, and an electron transfer chain that converts photonic excitation into a charge separation. The protein is Cytochrome b559 subunit alpha of Panax ginseng (Korean ginseng).